We begin with the raw amino-acid sequence, 215 residues long: Large ribosomal subunit protein uL3 (215 aa).

Residue Gln-156 is modified to N5-methylglutamine.

This sequence belongs to the universal ribosomal protein uL3 family. As to quaternary structure, part of the 50S ribosomal subunit. Forms a cluster with proteins L14 and L19. In terms of processing, methylated by PrmB.

In terms of biological role, one of the primary rRNA binding proteins, it binds directly near the 3'-end of the 23S rRNA, where it nucleates assembly of the 50S subunit. This Xylella fastidiosa (strain M23) protein is Large ribosomal subunit protein uL3.